We begin with the raw amino-acid sequence, 436 residues long: Testican-3 (436 aa).

Positions 1 to 21 are cleaved as a signal peptide; that stretch reads MLKVSAVLCVCAAAWCSQSLA. 8 cysteine pairs are disulfide-bonded: C90–C101, C95–C111, C139–C169, C142–C162, C151–C183, C317–C341, C352–C359, and C361–C380. Residues 133 to 185 enclose the Kazal-like domain; it reads GPILSTCKQCPVVYPSPVCGSDGHTYSFQCKLEYQACVLGKQISVKCEGHCPC. Positions 314-380 constitute a Thyroglobulin type-1 domain; that stretch reads DPPCQTELSN…GSRINGVADC (67 aa). O-linked (Xyl...) (glycosaminoglycan) serine glycans are attached at residues S387 and S392. Residues 393 to 436 form a disordered region; it reads GDFHEWTDDEDDEDDIMNDEDEIEDDDEDEGDDDDGGDDHDVYI. Positions 399 to 430 are enriched in acidic residues; the sequence is TDDEDDEDDIMNDEDEIEDDDEDEGDDDDGGD.

Post-translationally, contains chondroitin sulfate and heparan sulfate O-linked oligosaccharides. Expressed in brain.

Its subcellular location is the secreted. It is found in the extracellular space. It localises to the extracellular matrix. In terms of biological role, may participate in diverse steps of neurogenesis. Inhibits the processing of pro-matrix metalloproteinase 2 (MMP-2) by MT1-MMP and MT3-MMP. May interfere with tumor invasion. This Homo sapiens (Human) protein is Testican-3 (SPOCK3).